Here is a 948-residue protein sequence, read N- to C-terminus: Alanine--tRNA ligase (948 aa).

His-638, His-642, Cys-739, and His-743 together coordinate Zn(2+).

The protein belongs to the class-II aminoacyl-tRNA synthetase family. Requires Zn(2+) as cofactor.

Its subcellular location is the cytoplasm. It carries out the reaction tRNA(Ala) + L-alanine + ATP = L-alanyl-tRNA(Ala) + AMP + diphosphate. Its function is as follows. Catalyzes the attachment of alanine to tRNA(Ala) in a two-step reaction: alanine is first activated by ATP to form Ala-AMP and then transferred to the acceptor end of tRNA(Ala). Also edits incorrectly charged Ser-tRNA(Ala) and Gly-tRNA(Ala) via its editing domain. This is Alanine--tRNA ligase from Paracidovorax citrulli (strain AAC00-1) (Acidovorax citrulli).